The primary structure comprises 143 residues: Nucleoside diphosphate kinase (143 aa).

The ATP site is built by Lys11, Phe59, Arg87, Thr93, Arg104, and Asn114. His117 serves as the catalytic Pros-phosphohistidine intermediate.

The protein belongs to the NDK family. In terms of assembly, homotetramer. Requires Mg(2+) as cofactor.

The protein localises to the cytoplasm. The catalysed reaction is a 2'-deoxyribonucleoside 5'-diphosphate + ATP = a 2'-deoxyribonucleoside 5'-triphosphate + ADP. The enzyme catalyses a ribonucleoside 5'-diphosphate + ATP = a ribonucleoside 5'-triphosphate + ADP. Its function is as follows. Major role in the synthesis of nucleoside triphosphates other than ATP. The ATP gamma phosphate is transferred to the NDP beta phosphate via a ping-pong mechanism, using a phosphorylated active-site intermediate. The chain is Nucleoside diphosphate kinase from Citrobacter koseri (strain ATCC BAA-895 / CDC 4225-83 / SGSC4696).